A 220-amino-acid polypeptide reads, in one-letter code: Peptidyl-tRNA hydrolase (220 aa).

TRNA is bound at residue tyrosine 14. The active-site Proton acceptor is histidine 19. Residues phenylalanine 66, asparagine 68, and asparagine 114 each coordinate tRNA. The segment at 184–220 (QAFNSTDLRPRPEPVPAPQPADVSGPQETGPAERPEV) is disordered.

It belongs to the PTH family. In terms of assembly, monomer.

It localises to the cytoplasm. The enzyme catalyses an N-acyl-L-alpha-aminoacyl-tRNA + H2O = an N-acyl-L-amino acid + a tRNA + H(+). Functionally, hydrolyzes ribosome-free peptidyl-tRNAs (with 1 or more amino acids incorporated), which drop off the ribosome during protein synthesis, or as a result of ribosome stalling. Catalyzes the release of premature peptidyl moieties from peptidyl-tRNA molecules trapped in stalled 50S ribosomal subunits, and thus maintains levels of free tRNAs and 50S ribosomes. This Deinococcus deserti (strain DSM 17065 / CIP 109153 / LMG 22923 / VCD115) protein is Peptidyl-tRNA hydrolase.